Here is a 425-residue protein sequence, read N- to C-terminus: Enolase (425 aa).

Q170 provides a ligand contact to (2R)-2-phosphoglycerate. The Proton donor role is filled by E214. Residues D250, E291, and D317 each coordinate Mg(2+). (2R)-2-phosphoglycerate contacts are provided by K342, R371, S372, and K393. K342 serves as the catalytic Proton acceptor.

It belongs to the enolase family. Mg(2+) is required as a cofactor.

The protein localises to the cytoplasm. Its subcellular location is the secreted. The protein resides in the cell surface. It catalyses the reaction (2R)-2-phosphoglycerate = phosphoenolpyruvate + H2O. Its pathway is carbohydrate degradation; glycolysis; pyruvate from D-glyceraldehyde 3-phosphate: step 4/5. In terms of biological role, catalyzes the reversible conversion of 2-phosphoglycerate (2-PG) into phosphoenolpyruvate (PEP). It is essential for the degradation of carbohydrates via glycolysis. This Methanococcoides burtonii (strain DSM 6242 / NBRC 107633 / OCM 468 / ACE-M) protein is Enolase.